Here is a 64-residue protein sequence, read N- to C-terminus: uncharacterized protein (64 aa).

It to P.abyssi PAB3148.

This is an uncharacterized protein from Archaeoglobus fulgidus (strain ATCC 49558 / DSM 4304 / JCM 9628 / NBRC 100126 / VC-16).